The following is a 153-amino-acid chain: Large ribosomal subunit protein uL13 (153 aa).

Belongs to the universal ribosomal protein uL13 family. As to quaternary structure, part of the 50S ribosomal subunit.

In terms of biological role, this protein is one of the early assembly proteins of the 50S ribosomal subunit, although it is not seen to bind rRNA by itself. It is important during the early stages of 50S assembly. The chain is Large ribosomal subunit protein uL13 from Chelativorans sp. (strain BNC1).